A 255-amino-acid polypeptide reads, in one-letter code: Pyridoxine 5'-phosphate synthase (255 aa).

A 3-amino-2-oxopropyl phosphate-binding site is contributed by N12. Residue 14–15 coordinates 1-deoxy-D-xylulose 5-phosphate; the sequence is DH. R23 serves as a coordination point for 3-amino-2-oxopropyl phosphate. Catalysis depends on H48, which acts as the Proton acceptor. 1-deoxy-D-xylulose 5-phosphate is bound by residues R50 and H55. Residue E75 is the Proton acceptor of the active site. T105 provides a ligand contact to 1-deoxy-D-xylulose 5-phosphate. The Proton donor role is filled by H199. Residues G200 and 221-222 each bind 3-amino-2-oxopropyl phosphate; that span reads GF.

This sequence belongs to the PNP synthase family. As to quaternary structure, homooctamer; tetramer of dimers.

Its subcellular location is the cytoplasm. It catalyses the reaction 3-amino-2-oxopropyl phosphate + 1-deoxy-D-xylulose 5-phosphate = pyridoxine 5'-phosphate + phosphate + 2 H2O + H(+). Its pathway is cofactor biosynthesis; pyridoxine 5'-phosphate biosynthesis; pyridoxine 5'-phosphate from D-erythrose 4-phosphate: step 5/5. In terms of biological role, catalyzes the complicated ring closure reaction between the two acyclic compounds 1-deoxy-D-xylulose-5-phosphate (DXP) and 3-amino-2-oxopropyl phosphate (1-amino-acetone-3-phosphate or AAP) to form pyridoxine 5'-phosphate (PNP) and inorganic phosphate. This chain is Pyridoxine 5'-phosphate synthase, found in Rhodopseudomonas palustris (strain BisB18).